Here is a 134-residue protein sequence, read N- to C-terminus: MSLKIRLARAGSKKRPYYHIVVADVRSPRDGRFIETVGAWNPMLAKDAERVKLDADRIQHWIAQGAQPTDRVLRFLDQAGLAKRPTRSNPTKGEPGKKAQERLAMAKQAEEEAAAKAAEAAAAAAAPAEEAASE.

Positions 80 to 134 (GLAKRPTRSNPTKGEPGKKAQERLAMAKQAEEEAAAKAAEAAAAAAAPAEEAASE) are disordered. Residues 115–134 (AKAAEAAAAAAAPAEEAASE) show a composition bias toward low complexity.

This sequence belongs to the bacterial ribosomal protein bS16 family.

The sequence is that of Small ribosomal subunit protein bS16 from Brucella anthropi (strain ATCC 49188 / DSM 6882 / CCUG 24695 / JCM 21032 / LMG 3331 / NBRC 15819 / NCTC 12168 / Alc 37) (Ochrobactrum anthropi).